Here is a 79-residue protein sequence, read N- to C-terminus: Cytochrome c oxidase assembly factor 6 homolog (79 aa).

The region spanning Arg9–Phe52 is the CHCH domain. A Cx9C motif motif is present at residues Cys12–Cys22. Cystine bridges form between Cys12/Cys44 and Cys22/Cys33. Residues Cys33 to Cys44 carry the Cx10C motif motif.

The protein belongs to the cytochrome c oxidase subunit 6B family. As to quaternary structure, found in a complex with TMEM177, COX20, MT-CO2/COX2, COX18, SCO1 and SCO2. Interacts with COA1, MT-CO2/COX2, SCO1, SCO2 and COX20. Interacts with COX20 in a MT-CO2/COX2- and COX18-dependent manner. Interacts with COX16.

Its subcellular location is the mitochondrion intermembrane space. In terms of biological role, involved in the maturation of the mitochondrial respiratory chain complex IV subunit MT-CO2/COX2. Thereby, may regulate early steps of complex IV assembly. Mitochondrial respiratory chain complex IV or cytochrome c oxidase is the component of the respiratory chain that catalyzes the transfer of electrons from intermembrane space cytochrome c to molecular oxygen in the matrix and as a consequence contributes to the proton gradient involved in mitochondrial ATP synthesis. May also be required for efficient formation of respiratory supercomplexes comprised of complexes III and IV. The chain is Cytochrome c oxidase assembly factor 6 homolog (COA6) from Bos taurus (Bovine).